A 539-amino-acid chain; its full sequence is Alpha-copaene synthase (539 aa).

Asp-290 and Asp-294 together coordinate Mg(2+). The substrate site is built by Asp-290, Asp-294, and Arg-432. The DDXXD motif motif lies at 290–294; the sequence is DDTFD.

This sequence belongs to the terpene synthase family. Monomer. The cofactor is Mg(2+). Mn(2+) is required as a cofactor.

The protein localises to the cytoplasm. It carries out the reaction (2E,6E)-farnesyl diphosphate = alpha-copaene + diphosphate. It catalyses the reaction (2E,6E)-farnesyl diphosphate = (+)-germacrene D + diphosphate. The catalysed reaction is (2E,6E)-farnesyl diphosphate = (-)-(E)-beta-caryophyllene + diphosphate. The enzyme catalyses (2E,6E)-farnesyl diphosphate = delta-cadinene + diphosphate. Its pathway is secondary metabolite biosynthesis; terpenoid biosynthesis. Functionally, converts farnesyl diphosphate to the bicyclic olefins alpha-copaene, (E)-beta-caryophyllene, and to the macrocyclic sesquiterpene germacrene D. Also mediates the biosynthesis of minor sesquiterpene hydrocarbons including delta-cadinene. Involved in indirect defense by producing volatile signals attracting natural enemies of herbivores. This Zea mays (Maize) protein is Alpha-copaene synthase.